A 277-amino-acid chain; its full sequence is Trypsin-2 (277 aa).

A signal peptide spans 1-19 (MSNKIAILLLAVVVAVVAC). Positions 20–50 (AQAQPSRRHHLVHPLLPRFLPRLHRDSNGHR) are cleaved as a propeptide — activation peptide. The Peptidase S1 domain occupies 51–276 (VVGGFQIDVS…VRDWVRENSG (226 aa)). Cys76 and Cys92 are disulfide-bonded. Active-site charge relay system residues include His91 and Asp136. Cystine bridges form between Cys201–Cys217 and Cys228–Cys252. Catalysis depends on Ser232, which acts as the Charge relay system.

It belongs to the peptidase S1 family. In terms of tissue distribution, midgut.

Its subcellular location is the secreted. The catalysed reaction is Preferential cleavage: Arg-|-Xaa, Lys-|-Xaa.. Its function is as follows. Major function may be to aid in digestion of the blood meal. The sequence is that of Trypsin-2 (TRYP2) from Anopheles gambiae (African malaria mosquito).